The primary structure comprises 42 residues: Photosystem I reaction center subunit IX (42 aa).

The chain crosses the membrane as a helical span at residues tyrosine 8–isoleucine 28.

It belongs to the PsaJ family.

The protein resides in the plastid. It localises to the chloroplast thylakoid membrane. In terms of biological role, may help in the organization of the PsaE and PsaF subunits. In Pyropia yezoensis (Susabi-nori), this protein is Photosystem I reaction center subunit IX.